The following is a 413-amino-acid chain: BEN domain-containing protein 7 (413 aa).

Glycyl lysine isopeptide (Lys-Gly) (interchain with G-Cter in SUMO2) cross-links involve residues Lys-16, Lys-56, and Lys-85. Residues 78-88 show a composition bias toward basic and acidic residues; that stretch reads GKEGEKLKEEP. Disordered regions lie at residues 78-153 and 208-243; these read GKEG…GELP and RTAVSRKRNKKKKVPPKTVEPLTVKQKPSGSEMEKK. 2 stretches are compositionally biased toward polar residues: residues 99–111 and 121–153; these read LNSSAEAPQSLHP and PPQSGQFSGQYGTRSRTFQSQPHPTTSSNGELP. Basic residues predominate over residues 211–222; it reads VSRKRNKKKKVP. A compositionally biased stretch (low complexity) spans 223 to 232; it reads PKTVEPLTVK. Residue Lys-243 forms a Glycyl lysine isopeptide (Lys-Gly) (interchain with G-Cter in SUMO2) linkage. Residues 287–392 form the BEN domain; that stretch reads GFDVFMPKSQ…IKLARRRLKR (106 aa). Thr-324 bears the Phosphothreonine mark. Position 328 is a phosphoserine (Ser-328).

The protein is BEN domain-containing protein 7 (BEND7) of Homo sapiens (Human).